Consider the following 579-residue polypeptide: XK-related protein 7 (579 aa).

The span at 1–18 (MAAKSDGAAASAGPDPEG) shows a compositional bias: low complexity. The interval 1–40 (MAAKSDGAAASAGPDPEGAAGGARGSAGGRGEAAAAAGPP) is disordered. Gly residues predominate over residues 19-31 (AAGGARGSAGGRG). The next 2 helical transmembrane spans lie at 59-79 (WVLC…WLAA) and 89-109 (YFSL…LLSF). Residues 146–165 (GAFRTKEGSPEPGPQPAPSS) are disordered. The next 5 membrane-spanning stretches (helical) occupy residues 260 to 280 (LLPA…LASY), 314 to 334 (GLAF…CIVG), 355 to 375 (GEEI…WFNV), 384 to 404 (MTLY…FWYS), and 415 to 435 (LIMV…MCVY). Positions 466–510 (ADAITSPPRSLPRTTGAERDGASAGERAGTPTPPVFQVRPGLPPT) are disordered.

This sequence belongs to the XK family.

It localises to the cell membrane. In Pan troglodytes (Chimpanzee), this protein is XK-related protein 7 (XKR7).